Reading from the N-terminus, the 60-residue chain is Large ribosomal subunit protein bL32 (60 aa).

The segment covering 1 to 19 (MGVPKRKTSKGRRDKRRAH) has biased composition (basic residues). The segment at 1-20 (MGVPKRKTSKGRRDKRRAHL) is disordered.

The protein belongs to the bacterial ribosomal protein bL32 family.

This is Large ribosomal subunit protein bL32 from Syntrophobacter fumaroxidans (strain DSM 10017 / MPOB).